Consider the following 252-residue polypeptide: 3-deoxy-manno-octulosonate cytidylyltransferase (252 aa).

Belongs to the KdsB family.

It is found in the cytoplasm. The catalysed reaction is 3-deoxy-alpha-D-manno-oct-2-ulosonate + CTP = CMP-3-deoxy-beta-D-manno-octulosonate + diphosphate. It functions in the pathway nucleotide-sugar biosynthesis; CMP-3-deoxy-D-manno-octulosonate biosynthesis; CMP-3-deoxy-D-manno-octulosonate from 3-deoxy-D-manno-octulosonate and CTP: step 1/1. It participates in bacterial outer membrane biogenesis; lipopolysaccharide biosynthesis. Its function is as follows. Activates KDO (a required 8-carbon sugar) for incorporation into bacterial lipopolysaccharide in Gram-negative bacteria. This Trichlorobacter lovleyi (strain ATCC BAA-1151 / DSM 17278 / SZ) (Geobacter lovleyi) protein is 3-deoxy-manno-octulosonate cytidylyltransferase.